The following is a 366-amino-acid chain: Putative F-box protein At1g26515 (366 aa).

Residues 1-20 form a disordered region; it reads MKTRSKKTKTENNQEKSKEK. The span at 8-20 shows a compositional bias: basic and acidic residues; the sequence is TKTENNQEKSKEK. In terms of domain architecture, F-box spans 20-66; it reads KNKFDQLPLDLEIEIFRRLPLKSVARFLTLSKSCAATIRSPSFITSF.

The protein is Putative F-box protein At1g26515 of Arabidopsis thaliana (Mouse-ear cress).